We begin with the raw amino-acid sequence, 887 residues long: Oxysterol-binding protein-related protein 3 (887 aa).

Residues 1–35 are disordered; the sequence is MMSDEKNLGVSQKLVSPSRSTSSCSSKQGSRQDSW. Phosphoserine is present on residues Ser-16 and Ser-34. The segment covering 16 to 32 has biased composition (low complexity); sequence SPSRSTSSCSSKQGSRQ. The region spanning 51–146 is the PH domain; the sequence is PPVQKGFLLK…WVSKLRHHRM (96 aa). An FFAT 1 motif is present at residues 161–167; that stretch reads HFFSGST. Residues Ser-200, Ser-251, and Ser-265 each carry the phosphoserine modification. Residues 261-326 form a disordered region; it reads GSFESPKKEK…KNYSDGSETS (66 aa). Basic residues predominate over residues 268–280; that stretch reads KEKRSHRRWRSRA. 10 positions are modified to phosphoserine: Ser-304, Ser-309, Ser-320, Ser-323, Ser-371, Ser-372, Ser-410, Ser-425, Ser-437, and Ser-440. Positions 450–454 match the FFAT 2 motif; that stretch reads EFFDA.

It belongs to the OSBP family. As to quaternary structure, homodimer. Interacts with RRAS. Interacts (phosphorylated form) with VAPA. Interacts with OSBPL6. In terms of processing, phosphorylation is enhanced in vitro by phorbol-12-myristate-13-acetate (PMA), forskolin and calcium ionophore A23187. Phosphorylation seems to be stimulated in conditions of low cell-cell (or cell-matrix) adhesion. As to expression, expressed in a subset of small lymphocytes (at protein level). Expressed at high concentration in kidney, lymph node and thymus. Expressed at moderate concentration in stomach, jejunum, ileum, appendix, spleen, leukocytes, trachea, lung and thyroid gland. Expressed at low concentration in whole brain, esophagus, duodenum, ileocecum, colon, skeletal muscle, bone marrow, placenta and mammary gland. Isoform 1a, isoform 1b, isoform 1c and isoform 1d are highly expressed in brain, bone marrow, colon, kidney, lung, skeletal muscle, spleen, thymus and thyroid. Not expressed in heart and liver. Isoform 2a, isoform 2b, isoform 2c and isoform 2d are expressed in brain, bone marrow, kidney, skeletal muscle, spleen, thymus and thyroid. Not expressed in heart, liver and lung.

It localises to the endoplasmic reticulum membrane. It is found in the cytoplasm. Its subcellular location is the cytosol. The protein localises to the cell membrane. The protein resides in the cell projection. It localises to the filopodium tip. It is found in the nucleus membrane. In terms of biological role, phosphoinositide-binding protein which associates with both cell and endoplasmic reticulum (ER) membranes. Can bind to the ER membrane protein VAPA and recruit VAPA to plasma membrane sites, thus linking these intracellular compartments. The ORP3-VAPA complex stimulates RRAS signaling which in turn attenuates integrin beta-1 (ITGB1) activation at the cell surface. With VAPA, may regulate ER morphology. Has a role in regulation of the actin cytoskeleton, cell polarity and cell adhesion. Binds to phosphoinositides with preference for PI(3,4)P2 and PI(3,4,5)P3. Also binds 25-hydroxycholesterol and cholesterol. The polypeptide is Oxysterol-binding protein-related protein 3 (OSBPL3) (Homo sapiens (Human)).